A 91-amino-acid polypeptide reads, in one-letter code: DNA-directed RNA polymerase subunit omega (91 aa).

This sequence belongs to the RNA polymerase subunit omega family. In terms of assembly, the RNAP catalytic core consists of 2 alpha, 1 beta, 1 beta' and 1 omega subunit. When a sigma factor is associated with the core the holoenzyme is formed, which can initiate transcription.

The catalysed reaction is RNA(n) + a ribonucleoside 5'-triphosphate = RNA(n+1) + diphosphate. Its function is as follows. Promotes RNA polymerase assembly. Latches the N- and C-terminal regions of the beta' subunit thereby facilitating its interaction with the beta and alpha subunits. The protein is DNA-directed RNA polymerase subunit omega of Yersinia pestis bv. Antiqua (strain Antiqua).